The chain runs to 258 residues: Peptidase inhibitor 15 (258 aa).

The first 21 residues, 1 to 21 (MIMNSAVSLVILLSLLCEAHT), serve as a signal peptide directing secretion. The propeptide occupies 22-60 (VVLLNPTDSSLPANNFTDTEAALSTPLESADIPKARRKR). Asn-36 and Asn-124 each carry an N-linked (GlcNAc...) asparagine glycan. The SCP domain maps to 71–211 (LDYHNQVRGK…RRAVYLVCNY (141 aa)).

The protein belongs to the CRISP family. N-glycosylated. In terms of tissue distribution, weakly expressed. Expressed at low level in prostate, mammary gland, salivary gland and thyroid gland.

The protein localises to the secreted. Serine protease inhibitor which displays weak inhibitory activity against trypsin. May play a role in facial patterning during embryonic development. The protein is Peptidase inhibitor 15 (Pi15) of Mus musculus (Mouse).